Here is a 222-residue protein sequence, read N- to C-terminus: Pectate lyase A (222 aa).

The first 25 residues, 1 to 25, serve as a signal peptide directing secretion; it reads MKKMLTLLLSAGLVASIFGVMPAAA.

The protein belongs to the polysaccharide lyase 3 family. Ca(2+) is required as a cofactor.

It localises to the secreted. It carries out the reaction Eliminative cleavage of (1-&gt;4)-alpha-D-galacturonan to give oligosaccharides with 4-deoxy-alpha-D-galact-4-enuronosyl groups at their non-reducing ends.. The catalysed reaction is Eliminative cleavage of (1-&gt;4)-alpha-D-galacturonan methyl ester to give oligosaccharides with 4-deoxy-6-O-methyl-alpha-D-galact-4-enuronosyl groups at their non-reducing ends.. It participates in glycan metabolism; pectin degradation; 2-dehydro-3-deoxy-D-gluconate from pectin: step 2/5. Strongly inhibited by Ba(2+). To a lesser extent, is also inhibited by Sn(2+), Mg(2+) and Ag(+). Inhibited by EDTA in vitro. Its function is as follows. Catalyzes the depolymerization of both polygalacturonate and pectins of methyl esterification degree from 22 to 89%, with an endo mode of action. In contrast to the majority of pectate lyases, displays high activity on highly methylated pectins. Is not able to cleave trigalacturonate. Does not degrade xylans and carboxymethylcellulose (CMC). This chain is Pectate lyase A (pelA), found in Paenibacillus barcinonensis.